A 163-amino-acid chain; its full sequence is E3 ubiquitin-protein ligase ATL23 (163 aa).

The chain crosses the membrane as a helical span at residues 35–55 (ALLLPCVGMCIVFLIYLFLLW). The RING-type; atypical zinc-finger motif lies at 104–146 (CAVCLEDIESGQSTRLVPGCNHGFHQLCADTWLSNHTVCPVCR).

It belongs to the RING-type zinc finger family. ATL subfamily.

Its subcellular location is the membrane. It carries out the reaction S-ubiquitinyl-[E2 ubiquitin-conjugating enzyme]-L-cysteine + [acceptor protein]-L-lysine = [E2 ubiquitin-conjugating enzyme]-L-cysteine + N(6)-ubiquitinyl-[acceptor protein]-L-lysine.. It functions in the pathway protein modification; protein ubiquitination. Functionally, E3 ubiquitin-protein ligase able to catalyze polyubiquitination with ubiquitin-conjugating enzyme E2 UBC8, UBC10, UBC11, UBC28 and UBC29 in vitro. This is E3 ubiquitin-protein ligase ATL23 (ATL23) from Arabidopsis thaliana (Mouse-ear cress).